Consider the following 568-residue polypeptide: Phosphoprotein (568 aa).

Disordered stretches follow at residues 1-23 (MDQD…GGRE) and 38-320 (SEPT…GIGE). Basic and acidic residues predominate over residues 7–20 (ILKEDSEVEREAPG). The interval 33-41 (DAVLSSEPT) is N0 binding. A compositionally biased stretch (polar residues) spans 50-59 (LHNTINTPQG). A Phosphoserine; by host modification is found at Ser-68. The segment covering 83–101 (RSGEESRVSGRTSKPEAEA) has biased composition (basic and acidic residues). Phosphoserine; by host is present on Ser-125. Residues 150–168 (GIEDENREMAAHPDKRGED) show a composition bias toward basic and acidic residues. A compositionally biased stretch (polar residues) spans 191 to 206 (ASNNGRSMEPGSSHSA). Ser-192, Ser-249, Ser-257, and Ser-260 each carry phosphoserine; by host. The tract at residues 344-411 (FESSRDASYV…SFRDTYKRFS (68 aa)) is multimerization. Residues 364–429 (YAEMTFNVCG…LLMSNLSTLH (66 aa)) are a coiled coil. The l protein binding stretch occupies residues 412–445 (EYQKEQNSLLMSNLSTLHIITDRGGKTDNTDSLT). Phosphoserine; by host occurs at positions 447 and 449. The interval 479–568 (DLIREDEFRD…VEEDIESLTN (90 aa)) is interaction with the nucleocapsid (N-RNA). The interval 496 to 516 (QERDTEPRASNASRLLPSKEK) is disordered.

It belongs to the respirovirus P protein family. In terms of assembly, homotetramer. Interacts (via multimerization domain) with polymerase L; this interaction forms the polymerase complex. Interacts (via N-terminus) with N0; this interaction allows P to chaperon N0 before encapsidation and form the N-P complex. Interacts (via C-terminus) with N-RNA template; this interaction positions the polymerase on the template. Phosphorylated by PKC/PRKCZ, and other unknown kinases. Phosphorylation is necessary for viral transcription and replication. The N-terminus contains the majority of phosphorylated sites. Ser-249 is the major site of phosphorylation, but is not necessary for most functions.

In terms of biological role, essential cofactor of the RNA polymerase L that plays a central role in the transcription and replication by forming the polymerase complex with RNA polymerase L and recruiting L to the genomic N-RNA template for RNA synthesis. Also plays a central role in the encapsidation of nascent RNA chains by forming the encapsidation complex with the nucleocapsid protein N (N-P complex). Acts as a chaperone for newly synthesized free N protein, so-called N0, allowing encapsidation of nascent RNA chains during replication. The nucleoprotein protein N prevents excessive phosphorylation of P, which leads to down-regulation of viral transcription/ replication. Participates, together with N, in the formation of viral factories (viroplasms), which are large inclusions in the host cytoplasm where replication takes place. Recruits host PI4KB and remodel the host endoplasmic reticulum membrane to form viral replication factories. The polypeptide is Phosphoprotein (P/V/C) (Sendai virus (strain Z) (SeV)).